We begin with the raw amino-acid sequence, 752 residues long: Photosystem I P700 chlorophyll a apoprotein A1 (752 aa).

8 helical membrane passes run isoleucine 73–alanine 96, leucine 159–histidine 182, leucine 198–alanine 222, isoleucine 294–tyrosine 312, tryptophan 349–tyrosine 372, leucine 388–valine 414, alanine 436–histidine 458, and phenylalanine 533–leucine 551. The [4Fe-4S] cluster site is built by cysteine 575 and cysteine 584. The next 2 membrane-spanning stretches (helical) occupy residues histidine 591–tryptophan 612 and leucine 666–phenylalanine 688. Histidine 677 contributes to the chlorophyll a' binding site. Chlorophyll a-binding residues include methionine 685 and tyrosine 693. Tryptophan 694 is a phylloquinone binding site. The chain crosses the membrane as a helical span at residues alanine 726–alanine 746.

It belongs to the PsaA/PsaB family. As to quaternary structure, the PsaA/B heterodimer binds the P700 chlorophyll special pair and subsequent electron acceptors. PSI consists of a core antenna complex that captures photons, and an electron transfer chain that converts photonic excitation into a charge separation. The cyanobacterial PSI reaction center is composed of one copy each of PsaA,B,C,D,E,F,I,J,K,L,M and X, and forms trimeric complexes. Requires PSI electron transfer chain: 5 chlorophyll a, 1 chlorophyll a', 2 phylloquinones and 3 4Fe-4S clusters. PSI core antenna: 90 chlorophyll a, 22 carotenoids, 3 phospholipids and 1 galactolipid. P700 is a chlorophyll a/chlorophyll a' dimer, A0 is one or more chlorophyll a, A1 is one or both phylloquinones and FX is a shared 4Fe-4S iron-sulfur center. as cofactor.

The protein resides in the cellular thylakoid membrane. It carries out the reaction reduced [plastocyanin] + hnu + oxidized [2Fe-2S]-[ferredoxin] = oxidized [plastocyanin] + reduced [2Fe-2S]-[ferredoxin]. Functionally, psaA and PsaB bind P700, the primary electron donor of photosystem I (PSI), as well as the electron acceptors A0, A1 and FX. PSI is a plastocyanin/cytochrome c6-ferredoxin oxidoreductase, converting photonic excitation into a charge separation, which transfers an electron from the donor P700 chlorophyll pair to the spectroscopically characterized acceptors A0, A1, FX, FA and FB in turn. Oxidized P700 is reduced on the lumenal side of the thylakoid membrane by plastocyanin or cytochrome c6. The sequence is that of Photosystem I P700 chlorophyll a apoprotein A1 from Mastigocladus laminosus (Fischerella sp.).